We begin with the raw amino-acid sequence, 279 residues long: Acetylglutamate kinase (279 aa).

Substrate is bound by residues glycine 64–glycine 65, arginine 86, and asparagine 177.

This sequence belongs to the acetylglutamate kinase family. ArgB subfamily.

It localises to the cytoplasm. It carries out the reaction N-acetyl-L-glutamate + ATP = N-acetyl-L-glutamyl 5-phosphate + ADP. The protein operates within amino-acid biosynthesis; L-arginine biosynthesis; N(2)-acetyl-L-ornithine from L-glutamate: step 2/4. Catalyzes the ATP-dependent phosphorylation of N-acetyl-L-glutamate. This is Acetylglutamate kinase from Campylobacter jejuni subsp. jejuni serotype O:23/36 (strain 81-176).